Reading from the N-terminus, the 896-residue chain is Echinoderm microtubule-associated protein-like 3 (896 aa).

An N-acetylmethionine modification is found at M1. Positions 16–43 (LQSLSQRLRVQEQEMELVKAALAEALRL) form a coiled coil. The interval 50–209 (PSSLQGSGTP…GGPGSRRSNY (160 aa)) is disordered. The segment covering 77-88 (TPSLVSRGTQTE) has biased composition (polar residues). Over residues 134 to 145 (PGPPGILRPLQP) the composition is skewed to pro residues. Residues 154-163 (RNSSSSSSPS) are compositionally biased toward low complexity. Residues 174–189 (AISSANLLVRSGSTES) show a composition bias toward polar residues. Residues S176, S198, and S204 each carry the phosphoserine modification. WD repeat units follow at residues 234–286 (RSLE…LYRP), 295–344 (GGGQ…IWDS), 350–392 (LQEI…VWDC), 398–434 (LAEI…FWNW), 448–487 (RKQG…TWGR), 504–543 (YGIV…QWGP), 549–584 (QEAE…LRGD), 589–626 (FSPV…LWDG), 629–667 (HALA…VLDT), 674–709 (SDVI…IYSV), 716–755 (SSRF…YWDV), 765–823 (RYES…LFQY), and 830–869 (APSR…QWRV). Residues 876-896 (GPAPATPSRTPSLSPASSLDV) are disordered. Residues 877 to 896 (PAPATPSRTPSLSPASSLDV) are compositionally biased toward low complexity. Phosphothreonine; by CDK1 is present on T881. Phosphoserine is present on S883.

This sequence belongs to the WD repeat EMAP family. As to quaternary structure, homotrimer; self-association is mediated by the N-terminal coiled coil. Interacts with EML2 but not with EML1. Interacts (phosphorylated at Thr-881) with TUBG1, HAUS1, HAUS2, HAUS3, HAUS4, HAUS5, HAUS6, HAUS7 and HAUS8. In terms of processing, phosphorylation at Thr-881 during mitosis is required for interaction with TUBG1, HAUS1, HAUS2, HAUS3, HAUS4, HAUS5, HAUS6, HAUS7 and HAUS8 and their recruitment to spindle microtubules.

It is found in the cytoplasm. It localises to the cytoskeleton. The protein resides in the nucleus. The protein localises to the midbody. Its subcellular location is the spindle. In terms of biological role, regulates mitotic spindle assembly, microtubule (MT)-kinetochore attachment and chromosome separation via recruitment of HAUS augmin-like complex and TUBG1 to the existing MTs and promoting MT-based MT nucleation. Required for proper alignnment of chromosomes during metaphase. This chain is Echinoderm microtubule-associated protein-like 3 (EML3), found in Homo sapiens (Human).